Reading from the N-terminus, the 653-residue chain is Probable sulfate transporter 3.4 (653 aa).

Residues M1–D92 are Cytoplasmic-facing. A helical transmembrane segment spans residues V93–L113. Residues A114–N115 are Extracellular-facing. The helical transmembrane segment at L116–G136 threads the bilayer. The Cytoplasmic segment spans residues S137 to H140. A helical membrane pass occupies residues L141 to V161. Topologically, residues S162–S167 are extracellular. The chain crosses the membrane as a helical span at residues I168–L188. At G189 to G194 the chain is on the cytoplasmic side. The helical transmembrane segment at F195 to I215 threads the bilayer. Residues V216–R247 are Extracellular-facing. Residues S248–T268 form a helical membrane-spanning segment. The Cytoplasmic segment spans residues R269–F279. Residues W280–I300 traverse the membrane as a helical segment. At R301–H331 the chain is on the extracellular side. The chain crosses the membrane as a helical span at residues L332 to A352. Topologically, residues V353 to E370 are cytoplasmic. A helical membrane pass occupies residues M371–G391. The Extracellular portion of the chain corresponds to S392–A407. A helical membrane pass occupies residues V408–F428. The Cytoplasmic segment spans residues Y429 to N433. Residues V434–Y454 form a helical membrane-spanning segment. Topologically, residues K455–F471 are extracellular. Residues F472–I492 form a helical membrane-spanning segment. Over K493 to P653 the chain is Cytoplasmic. The region spanning R520 to L643 is the STAS domain.

Belongs to the SLC26A/SulP transporter (TC 2.A.53) family.

It is found in the membrane. H(+)/sulfate cotransporter that may play a role in the regulation of sulfate assimilation. The sequence is that of Probable sulfate transporter 3.4 (SULTR3;4) from Arabidopsis thaliana (Mouse-ear cress).